A 136-amino-acid chain; its full sequence is Membrane-bound negative regulator YvrL (136 aa).

Helical transmembrane passes span 18-38 (LLAA…LFSL), 46-66 (AAHV…FEPF), 83-103 (LFIL…AHTT), and 106-126 (LISD…VFLI).

The protein localises to the cell membrane. Its function is as follows. Negatively regulates RNA polymerase sigma factor SigO-dependent transcription. Prevents the expression or secretion of OxdC under nonstress conditions. May act as an anti-sigma factor. The protein is Membrane-bound negative regulator YvrL (yvrL) of Bacillus subtilis (strain 168).